A 590-amino-acid chain; its full sequence is Leishmanolysin (590 aa).

A signal peptide spans 1–39 (MSVDSSSTHRHRSVAARLVRLAAAGAAVIAAVGTAAAWA). A propeptide spans 40 to 87 (HAGAVQHRCIHDAMQARVRQSVARHHTAPGAVSAVGLSYVTLGAAPTV) (activation peptide). Cystine bridges form between C112/C129 and C178/C217. H251 serves as a coordination point for Zn(2+). E252 is an active-site residue. H255 lines the Zn(2+) pocket. An N-linked (GlcNAc...) asparagine glycan is attached at N287. Cystine bridges form between C301/C373, C380/C443, C393/C412, C402/C477, C454/C498, C503/C553, and C523/C546. H321 contacts Zn(2+). A lipid anchor (GPI-anchor amidated asparagine) is attached at N565. A propeptide spans 566-590 (AAAGRRGPRAAATALLVAALLAVAL) (removed in mature form).

The protein belongs to the peptidase M8 family. Zn(2+) serves as cofactor.

The protein resides in the cell membrane. It catalyses the reaction Preference for hydrophobic residues at P1 and P1' and basic residues at P2' and P3'. A model nonapeptide is cleaved at -Ala-Tyr-|-Leu-Lys-Lys-.. Functionally, has an integral role during the infection of macrophages in the mammalian host. In Leishmania donovani, this protein is Leishmanolysin (gp63).